Consider the following 954-residue polypeptide: Glycine dehydrogenase (decarboxylating) (954 aa).

Residue K700 is modified to N6-(pyridoxal phosphate)lysine.

Belongs to the GcvP family. The glycine cleavage system is composed of four proteins: P, T, L and H. Requires pyridoxal 5'-phosphate as cofactor.

The catalysed reaction is N(6)-[(R)-lipoyl]-L-lysyl-[glycine-cleavage complex H protein] + glycine + H(+) = N(6)-[(R)-S(8)-aminomethyldihydrolipoyl]-L-lysyl-[glycine-cleavage complex H protein] + CO2. Its function is as follows. The glycine cleavage system catalyzes the degradation of glycine. The P protein binds the alpha-amino group of glycine through its pyridoxal phosphate cofactor; CO(2) is released and the remaining methylamine moiety is then transferred to the lipoamide cofactor of the H protein. The polypeptide is Glycine dehydrogenase (decarboxylating) (Dinoroseobacter shibae (strain DSM 16493 / NCIMB 14021 / DFL 12)).